Reading from the N-terminus, the 487-residue chain is Anthocyanidin 3-O-glucosyltransferase 5 (487 aa).

H22 (proton acceptor) is an active-site residue. H22 provides a ligand contact to an anthocyanidin. D119 (charge relay) is an active-site residue. Positions 354, 369, 372, 373, 374, and 377 each coordinate UDP-alpha-D-glucose. Position 392 (A392) interacts with an anthocyanidin. The UDP-alpha-D-glucose site is built by E393 and Q394.

It belongs to the UDP-glycosyltransferase family. In terms of tissue distribution, faintly expressed in cotyledons.

The enzyme catalyses an anthocyanidin + UDP-alpha-D-glucose + H(+) = an anthocyanidin 3-O-beta-D-glucoside + UDP. Its pathway is pigment biosynthesis; anthocyanin biosynthesis. Functionally, in the presence of other necessary color factors, this glycosylation reaction allows the accumulation of anthocyanin pigments. The chain is Anthocyanidin 3-O-glucosyltransferase 5 (GT5) from Manihot esculenta (Cassava).